A 199-amino-acid chain; its full sequence is MESDQSKVESDQSKMESDQSKVESDQSISQSTSKKRSQYSLRLEAKQRLRFNYGVTERQLLKYVCIAKKARGSTGQVLLQLLEMRLDNIIFRLGLSPTIPGARQLVNHRHILVNDQIVDIPSYRCKPNDIITVRDHQKSQELIKRNIKLAKIDEIPSHLNISYLEETKPKGFINKIVDRGSIGLEINELLVVEYYSRQA.

The span at 1–24 (MESDQSKVESDQSKMESDQSKVES) shows a compositional bias: basic and acidic residues. The segment at 1 to 35 (MESDQSKVESDQSKMESDQSKVESDQSISQSTSKK) is disordered. In terms of domain architecture, S4 RNA-binding spans 84–146 (MRLDNIIFRL…QKSQELIKRN (63 aa)).

The protein belongs to the universal ribosomal protein uS4 family. As to quaternary structure, part of the 30S ribosomal subunit. Contacts protein S5. The interaction surface between S4 and S5 is involved in control of translational fidelity.

The protein resides in the plastid. Its subcellular location is the chloroplast. One of the primary rRNA binding proteins, it binds directly to 16S rRNA where it nucleates assembly of the body of the 30S subunit. In terms of biological role, with S5 and S12 plays an important role in translational accuracy. The protein is Small ribosomal subunit protein uS4c (rps4) of Psilotum nudum (Whisk fern).